The sequence spans 556 residues: Energy-dependent translational throttle protein EttA (556 aa).

ABC transporter domains follow at residues 7 to 260 and 325 to 551; these read YTMH…EQEQ and IEVQ…RIKY. Position 40-47 (40-47) interacts with ATP; sequence GLNGAGKS. The arm stretch occupies residues 96–140; that stretch reads SEVKNALTRLDEVYALYADPDADFDKLAAEQANLEAIIQAHDGHN. The ptIM stretch occupies residues 243–323; that stretch reads GNYSSWLEQK…IPPGPRLGDK (81 aa). 357–364 serves as a coordination point for ATP; it reads GANGAGKS.

The protein belongs to the ABC transporter superfamily. ABCF family. Translational throttle EttA subfamily. As to quaternary structure, monomer. Probably contacts ribosomal proteins L1, L5, L33 and S7, the 16S and 23S rRNA and the P-site containing tRNA(fMet).

The protein localises to the cytoplasm. It carries out the reaction ATP + H2O = ADP + phosphate + H(+). Its function is as follows. A translation factor that gates the progression of the 70S ribosomal initiation complex (IC, containing tRNA(fMet) in the P-site) into the translation elongation cycle by using a mechanism sensitive to the ATP/ADP ratio. Binds to the 70S ribosome E-site where it modulates the state of the translating ribosome during subunit translocation. ATP hydrolysis probably frees it from the ribosome, which can enter the elongation phase. In Haemophilus influenzae (strain ATCC 51907 / DSM 11121 / KW20 / Rd), this protein is Energy-dependent translational throttle protein EttA.